The chain runs to 201 residues: Small ribosomal subunit protein uS4 (201 aa).

The 61-residue stretch at 91-151 (SRLDNVVYRA…DKSINTLPFE (61 aa)) folds into the S4 RNA-binding domain.

Belongs to the universal ribosomal protein uS4 family. In terms of assembly, part of the 30S ribosomal subunit. Contacts protein S5. The interaction surface between S4 and S5 is involved in control of translational fidelity.

Functionally, one of the primary rRNA binding proteins, it binds directly to 16S rRNA where it nucleates assembly of the body of the 30S subunit. In terms of biological role, with S5 and S12 plays an important role in translational accuracy. In Mycolicibacterium gilvum (strain PYR-GCK) (Mycobacterium gilvum (strain PYR-GCK)), this protein is Small ribosomal subunit protein uS4.